A 45-amino-acid chain; its full sequence is FKBP-type peptidyl-prolyl cis-trans isomerase, chloroplastic (45 aa).

This sequence belongs to the FKBP-type PPIase family. In terms of tissue distribution, expressed in leaves, but not in roots.

It is found in the plastid. The protein localises to the chloroplast thylakoid lumen. It catalyses the reaction [protein]-peptidylproline (omega=180) = [protein]-peptidylproline (omega=0). Its function is as follows. PPIases accelerate the folding of proteins. It catalyzes the cis-trans isomerization of proline imidic peptide bonds in oligopeptides. This chain is FKBP-type peptidyl-prolyl cis-trans isomerase, chloroplastic, found in Vicia faba (Broad bean).